The primary structure comprises 105 residues: Large ribosomal subunit protein eL42 (105 aa).

A disordered region spans residues 23-61; it reads KVTQYKKGKESKFAQGRRRYDRKQSGFGGQTKPIFRKKA.

The protein belongs to the eukaryotic ribosomal protein eL42 family.

The protein is Large ribosomal subunit protein eL42 of Caenorhabditis elegans.